Reading from the N-terminus, the 321-residue chain is Probable E3 ubiquitin-protein ligase BAH1-like 1 (321 aa).

In terms of domain architecture, SPX spans 1 to 149 (MKFAKKYEKY…YSKQGQEFKA (149 aa)). The segment at 217–266 (CSICLDTVFDPVALSCGHIYCYLCSCSAASVTIVDGLKSAERKSKCPLCR) adopts an RING-type zinc-finger fold.

It belongs to the RING-type zinc finger family.

It carries out the reaction S-ubiquitinyl-[E2 ubiquitin-conjugating enzyme]-L-cysteine + [acceptor protein]-L-lysine = [E2 ubiquitin-conjugating enzyme]-L-cysteine + N(6)-ubiquitinyl-[acceptor protein]-L-lysine.. Its pathway is protein modification; protein ubiquitination. The chain is Probable E3 ubiquitin-protein ligase BAH1-like 1 from Oryza sativa subsp. indica (Rice).